The chain runs to 579 residues: Probable cholinesterase (579 aa).

The signal sequence occupies residues 1 to 19; sequence MTDHKIIMLLLLGIYCIQA. N-linked (GlcNAc...) asparagine; by host glycans are attached at residues asparagine 77 and asparagine 144. The active-site Acyl-ester intermediate is serine 217. N-linked (GlcNAc...) asparagine; by host glycans are attached at residues asparagine 257, asparagine 269, and asparagine 283. Glutamate 337 acts as the Charge relay system in catalysis. 2 N-linked (GlcNAc...) asparagine; by host glycosylation sites follow: asparagine 373 and asparagine 394. Histidine 451 serves as the catalytic Charge relay system. An N-linked (GlcNAc...) asparagine; by host glycan is attached at asparagine 469.

It belongs to the type-B carboxylesterase/lipase family.

The enzyme catalyses an acylcholine + H2O = a carboxylate + choline + H(+). In terms of biological role, may be involved in the disruption of the host membrane. This Acanthamoeba polyphaga mimivirus (APMV) protein is Probable cholinesterase.